A 269-amino-acid polypeptide reads, in one-letter code: Activator of basal transcription 1 (269 aa).

Residues 1–40 (MVKAGELVEQQKAAMEEEANAEAAEDQEEPEDTACSSSSK) form a disordered region. A coiled-coil region spans residues 5-29 (GELVEQQKAAMEEEANAEAAEDQEE). Acidic residues predominate over residues 16 to 32 (EEEANAEAAEDQEEPED). The 98-residue stretch at 48-145 (GIVYLGHVPP…RKRSPFRYDL (98 aa)) folds into the RRM domain. A coiled-coil region spans residues 164–194 (AFERQVRRQRLRAEVAQAKRETDFYLRNVEQ). The interval 220-244 (EQEFRARKAARPGGRERARLANVED) is disordered.

It belongs to the ESF2/ABP1 family. As to quaternary structure, interacts with ESF1/ABTAP. Interacts with IGHMBP2. In terms of tissue distribution, ubiquitously expressed.

It is found in the nucleus. Its subcellular location is the nucleolus. Could be a novel TATA-binding protein (TBP) which can function as a basal transcription activator. Can act as a regulator of basal transcription for class II genes. The chain is Activator of basal transcription 1 (Abt1) from Mus musculus (Mouse).